The chain runs to 376 residues: uncharacterized protein (376 aa).

Residues 82–372 (KIYDDSAVEK…ATSGILWRAL (291 aa)) form the Peptidase M14 domain. 3 residues coordinate Zn(2+): H138, E141, and H283. Catalysis depends on E344, which acts as the Proton donor/acceptor.

The protein belongs to the peptidase M14 family. The cofactor is Zn(2+).

This is an uncharacterized protein from Bacillus subtilis (strain 168).